The following is a 282-amino-acid chain: Anamorsin homolog (282 aa).

The N-terminal SAM-like domain stretch occupies residues 5-151 (VDTNNFVLLL…EVGAKTALSL (147 aa)). Residues 152–196 (SFAPKPAQPKAETSAAQIWTLSAQDIDDEDVDLLDSDTLLDEDDL) form a linker region. 4 residues coordinate [2Fe-2S] cluster: Cys-208, Cys-218, Cys-221, and Cys-223. The interval 208–223 (CGPGSGKKKACKNCTC) is fe-S binding site A. Cys-243, Cys-246, Cys-254, and Cys-257 together coordinate [4Fe-4S] cluster. 2 short sequence motifs (cx2C motif) span residues 243–246 (CGSC) and 254–257 (CSTC). A fe-S binding site B region spans residues 243–257 (CGSCYLGDAFRCSTC).

This sequence belongs to the anamorsin family. In terms of assembly, monomer. Requires [2Fe-2S] cluster as cofactor. It depends on [4Fe-4S] cluster as a cofactor.

Its subcellular location is the cytoplasm. It localises to the mitochondrion intermembrane space. Functionally, component of the cytosolic iron-sulfur (Fe-S) protein assembly (CIA) machinery. Required for the maturation of extramitochondrial Fe-S proteins. Part of an electron transfer chain functioning in an early step of cytosolic Fe-S biogenesis, facilitating the de novo assembly of a [4Fe-4S] cluster on the cytosolic Fe-S scaffold complex. Electrons are transferred from NADPH via a FAD- and FMN-containing diflavin oxidoreductase. Together with the diflavin oxidoreductase, also required for the assembly of the diferric tyrosyl radical cofactor of ribonucleotide reductase (RNR), probably by providing electrons for reduction during radical cofactor maturation in the catalytic small subunit. This Nematostella vectensis (Starlet sea anemone) protein is Anamorsin homolog.